The primary structure comprises 124 residues: Glycine cleavage system H protein (124 aa).

Residues 22 to 104 (TATVGITDFA…YGDGWMIEIE (83 aa)) form the Lipoyl-binding domain. N6-lipoyllysine is present on lysine 63.

Belongs to the GcvH family. In terms of assembly, the glycine cleavage system is composed of four proteins: P, T, L and H. It depends on (R)-lipoate as a cofactor.

In terms of biological role, the glycine cleavage system catalyzes the degradation of glycine. The H protein shuttles the methylamine group of glycine from the P protein to the T protein. The sequence is that of Glycine cleavage system H protein from Salinibacter ruber (strain DSM 13855 / M31).